Consider the following 143-residue polypeptide: Nucleoside diphosphate kinase (143 aa).

Positions 11, 59, 87, 93, 104, and 114 each coordinate ATP. The active-site Pros-phosphohistidine intermediate is the histidine 117.

It belongs to the NDK family. In terms of assembly, homotetramer. The cofactor is Mg(2+).

It is found in the cytoplasm. The catalysed reaction is a 2'-deoxyribonucleoside 5'-diphosphate + ATP = a 2'-deoxyribonucleoside 5'-triphosphate + ADP. The enzyme catalyses a ribonucleoside 5'-diphosphate + ATP = a ribonucleoside 5'-triphosphate + ADP. Its function is as follows. Major role in the synthesis of nucleoside triphosphates other than ATP. The ATP gamma phosphate is transferred to the NDP beta phosphate via a ping-pong mechanism, using a phosphorylated active-site intermediate. The protein is Nucleoside diphosphate kinase of Enterobacter sp. (strain 638).